Consider the following 39-residue polypeptide: Photosystem II reaction center protein L (39 aa).

The chain crosses the membrane as a helical span at residues 18–38 (SLYLGLLLVFVLGILFSSYFF).

Belongs to the PsbL family. As to quaternary structure, PSII is composed of 1 copy each of membrane proteins PsbA, PsbB, PsbC, PsbD, PsbE, PsbF, PsbH, PsbI, PsbJ, PsbK, PsbL, PsbM, PsbT, PsbX, PsbY, PsbZ, Psb30/Ycf12, peripheral proteins PsbO, CyanoQ (PsbQ), PsbU, PsbV and a large number of cofactors. It forms dimeric complexes.

The protein localises to the cellular thylakoid membrane. Its function is as follows. One of the components of the core complex of photosystem II (PSII). PSII is a light-driven water:plastoquinone oxidoreductase that uses light energy to abstract electrons from H(2)O, generating O(2) and a proton gradient subsequently used for ATP formation. It consists of a core antenna complex that captures photons, and an electron transfer chain that converts photonic excitation into a charge separation. This subunit is found at the monomer-monomer interface and is required for correct PSII assembly and/or dimerization. This Trichormus variabilis (strain ATCC 29413 / PCC 7937) (Anabaena variabilis) protein is Photosystem II reaction center protein L.